The primary structure comprises 287 residues: Ribosomal RNA small subunit methyltransferase A (287 aa).

Positions 18, 20, 45, 66, 91, and 118 each coordinate S-adenosyl-L-methionine.

It belongs to the class I-like SAM-binding methyltransferase superfamily. rRNA adenine N(6)-methyltransferase family. RsmA subfamily.

The protein resides in the cytoplasm. It carries out the reaction adenosine(1518)/adenosine(1519) in 16S rRNA + 4 S-adenosyl-L-methionine = N(6)-dimethyladenosine(1518)/N(6)-dimethyladenosine(1519) in 16S rRNA + 4 S-adenosyl-L-homocysteine + 4 H(+). Functionally, specifically dimethylates two adjacent adenosines (A1518 and A1519) in the loop of a conserved hairpin near the 3'-end of 16S rRNA in the 30S particle. May play a critical role in biogenesis of 30S subunits. The chain is Ribosomal RNA small subunit methyltransferase A from Haemophilus influenzae (strain PittEE).